We begin with the raw amino-acid sequence, 220 residues long: MNLAKYIDHTALKPETTKAQIAQLAQEAREYEFMSVCVNPAHVKYAKSLLEGTDVLVCTVIGFPLGANTPAVKAFETKDAIADGAGEVDMVINIGALKDKNYDLVAEDIKAVVDAAGDVTTKVIIETALLTDEEKVKACEIAQAQGADFVKTSTGFSTGGATKEDVALMRKTVGPDMGVKASGGVRSYEDVMTMIEAGATRIGASAGVQILKGEEAKGDY.

The active-site Proton donor/acceptor is aspartate 89. Lysine 151 serves as the catalytic Schiff-base intermediate with acetaldehyde. The Proton donor/acceptor role is filled by lysine 180.

This sequence belongs to the DeoC/FbaB aldolase family. DeoC type 1 subfamily.

Its subcellular location is the cytoplasm. The enzyme catalyses 2-deoxy-D-ribose 5-phosphate = D-glyceraldehyde 3-phosphate + acetaldehyde. Its pathway is carbohydrate degradation; 2-deoxy-D-ribose 1-phosphate degradation; D-glyceraldehyde 3-phosphate and acetaldehyde from 2-deoxy-alpha-D-ribose 1-phosphate: step 2/2. Its function is as follows. Catalyzes a reversible aldol reaction between acetaldehyde and D-glyceraldehyde 3-phosphate to generate 2-deoxy-D-ribose 5-phosphate. This is Deoxyribose-phosphate aldolase from Macrococcus caseolyticus (strain JCSC5402) (Macrococcoides caseolyticum).